Here is a 338-residue protein sequence, read N- to C-terminus: UPF0284 protein TV0153 (338 aa).

The protein belongs to the UPF0284 family.

The chain is UPF0284 protein TV0153 from Thermoplasma volcanium (strain ATCC 51530 / DSM 4299 / JCM 9571 / NBRC 15438 / GSS1).